The sequence spans 117 residues: Aspartate 1-decarboxylase (117 aa).

The active-site Schiff-base intermediate with substrate; via pyruvic acid is Ser-25. Ser-25 carries the pyruvic acid (Ser) modification. Thr-57 is a binding site for substrate. Tyr-58 acts as the Proton donor in catalysis. Residue 73–75 participates in substrate binding; it reads GAA.

The protein belongs to the PanD family. Heterooctamer of four alpha and four beta subunits. It depends on pyruvate as a cofactor. Is synthesized initially as an inactive proenzyme, which is activated by self-cleavage at a specific serine bond to produce a beta-subunit with a hydroxyl group at its C-terminus and an alpha-subunit with a pyruvoyl group at its N-terminus.

It is found in the cytoplasm. It carries out the reaction L-aspartate + H(+) = beta-alanine + CO2. It functions in the pathway cofactor biosynthesis; (R)-pantothenate biosynthesis; beta-alanine from L-aspartate: step 1/1. Catalyzes the pyruvoyl-dependent decarboxylation of aspartate to produce beta-alanine. In Bacteroides fragilis (strain ATCC 25285 / DSM 2151 / CCUG 4856 / JCM 11019 / LMG 10263 / NCTC 9343 / Onslow / VPI 2553 / EN-2), this protein is Aspartate 1-decarboxylase.